A 745-amino-acid chain; its full sequence is Centromere protein I (745 aa).

The segment covering 1–27 (MATPRLTRNSQQQNRISQGSNSRQTTL) has biased composition (polar residues). The tract at residues 1-58 (MATPRLTRNSQQQNRISQGSNSRQTTLLDWKVKDKAGNSKSVLEESSSLEDSNHADDQ) is disordered. Positions 39 to 50 (SKSVLEESSSLE) are enriched in low complexity.

Belongs to the CENP-I/CTF3 family. In terms of assembly, component of the CENPA-CAD complex, composed of CENPI, CENPK, CENPL, CENPO, CENPP, CENPQ, CENPR and CENPS. The CENPA-CAD complex interacts with the CENPA-NAC complex, at least composed of CENPA, CENPC, CENPH, CENPM, CENPN, CENPT and CENPU. Interacts with SENP6. In terms of processing, sumoylated. Sumoylated form can be polyubiquitinated by RNF4, leading to its degradation. Desumoylation by SENP6 prevents its degradation. As to expression, highly expressed in testis, ovary and spleen. A much lower mRNA level is found in brain and lung, and no expression is detected in liver, kidney, heart, muscle, pituitary gland, prostate, epididymis and seminal vesicle.

It localises to the nucleus. It is found in the chromosome. The protein resides in the centromere. In terms of biological role, component of the CENPA-CAD (nucleosome distal) complex, a complex recruited to centromeres which is involved in assembly of kinetochore proteins, mitotic progression and chromosome segregation. May be involved in incorporation of newly synthesized CENPA into centromeres via its interaction with the CENPA-NAC complex. Required for the localization of CENPF, MAD1L1 and MAD2 (MAD2L1 or MAD2L2) to kinetochores. Involved in the response of gonadal tissues to follicle-stimulating hormone. The polypeptide is Centromere protein I (Cenpi) (Rattus norvegicus (Rat)).